The primary structure comprises 116 residues: S-adenosylmethionine decarboxylase proenzyme (116 aa).

Catalysis depends on Ser63, which acts as the Schiff-base intermediate with substrate; via pyruvic acid. Pyruvic acid (Ser); by autocatalysis is present on Ser63. Residue His68 is the Proton acceptor; for processing activity of the active site. Cys83 functions as the Proton donor; for catalytic activity in the catalytic mechanism.

It belongs to the prokaryotic AdoMetDC family. Type 1 subfamily. Heterotetramer of two alpha and two beta chains arranged as a dimer of alpha/beta heterodimers. Requires pyruvate as cofactor. In terms of processing, is synthesized initially as an inactive proenzyme. Formation of the active enzyme involves a self-maturation process in which the active site pyruvoyl group is generated from an internal serine residue via an autocatalytic post-translational modification. Two non-identical subunits are generated from the proenzyme in this reaction, and the pyruvate is formed at the N-terminus of the alpha chain, which is derived from the carboxyl end of the proenzyme. The post-translation cleavage follows an unusual pathway, termed non-hydrolytic serinolysis, in which the side chain hydroxyl group of the serine supplies its oxygen atom to form the C-terminus of the beta chain, while the remainder of the serine residue undergoes an oxidative deamination to produce ammonia and the pyruvoyl group blocking the N-terminus of the alpha chain.

The catalysed reaction is S-adenosyl-L-methionine + H(+) = S-adenosyl 3-(methylsulfanyl)propylamine + CO2. It functions in the pathway amine and polyamine biosynthesis; S-adenosylmethioninamine biosynthesis; S-adenosylmethioninamine from S-adenosyl-L-methionine: step 1/1. Functionally, catalyzes the decarboxylation of S-adenosylmethionine to S-adenosylmethioninamine (dcAdoMet), the propylamine donor required for the synthesis of the polyamines spermine and spermidine from the diamine putrescine. This chain is S-adenosylmethionine decarboxylase proenzyme, found in Clostridium botulinum (strain Okra / Type B1).